The primary structure comprises 91 residues: Small ribosomal subunit protein uS7 (91 aa).

Belongs to the universal ribosomal protein uS7 family. In terms of assembly, part of the 30S ribosomal subunit. Contacts proteins S9 and S11.

Its function is as follows. One of the primary rRNA binding proteins, it binds directly to 16S rRNA where it nucleates assembly of the head domain of the 30S subunit. Is located at the subunit interface close to the decoding center, probably blocks exit of the E-site tRNA. In Apple proliferation phytoplasma, this protein is Small ribosomal subunit protein uS7 (rpsG).